A 364-amino-acid polypeptide reads, in one-letter code: Dihydroorotate dehydrogenase (quinone) (364 aa).

FMN is bound by residues 61-65 (AGFDK) and Ser-85. Lys-65 lines the substrate pocket. 110–114 (NRMGF) serves as a coordination point for substrate. Positions 139 and 170 each coordinate FMN. Asn-170 contributes to the substrate binding site. Ser-173 serves as the catalytic Nucleophile. Asn-175 is a substrate binding site. Positions 214 and 242 each coordinate FMN. 243–244 (NT) lines the substrate pocket. FMN is bound by residues Gly-266, Gly-295, and 316-317 (YS).

Belongs to the dihydroorotate dehydrogenase family. Type 2 subfamily. In terms of assembly, monomer. The cofactor is FMN.

It localises to the cell membrane. The enzyme catalyses (S)-dihydroorotate + a quinone = orotate + a quinol. It participates in pyrimidine metabolism; UMP biosynthesis via de novo pathway; orotate from (S)-dihydroorotate (quinone route): step 1/1. Its function is as follows. Catalyzes the conversion of dihydroorotate to orotate with quinone as electron acceptor. The sequence is that of Dihydroorotate dehydrogenase (quinone) from Bradyrhizobium sp. (strain ORS 278).